The sequence spans 387 residues: Probable inactive shikimate kinase like 2, chloroplastic (387 aa).

Residues 1–71 (MAAFASGLAI…FNSFSCNCLS (71 aa)) constitute a chloroplast transit peptide. The segment at 368 to 387 (NIKPPGWDPSSDTGPHPQFT) is disordered.

Belongs to the shikimate kinase family.

It localises to the plastid. The protein resides in the chloroplast. The polypeptide is Probable inactive shikimate kinase like 2, chloroplastic (SKL2) (Arabidopsis thaliana (Mouse-ear cress)).